A 160-amino-acid chain; its full sequence is Transcription elongation factor GreA (160 aa).

Residues 10 to 37 are a coiled coil; that stretch reads TLEGKAKLENELQELKTVKRKEVVERIK.

Belongs to the GreA/GreB family.

Functionally, necessary for efficient RNA polymerase transcription elongation past template-encoded arresting sites. The arresting sites in DNA have the property of trapping a certain fraction of elongating RNA polymerases that pass through, resulting in locked ternary complexes. Cleavage of the nascent transcript by cleavage factors such as GreA or GreB allows the resumption of elongation from the new 3'terminus. GreA releases sequences of 2 to 3 nucleotides. This chain is Transcription elongation factor GreA, found in Listeria welshimeri serovar 6b (strain ATCC 35897 / DSM 20650 / CCUG 15529 / CIP 8149 / NCTC 11857 / SLCC 5334 / V8).